Reading from the N-terminus, the 365-residue chain is Patr class I histocompatibility antigen, A-2 alpha chain (365 aa).

The N-terminal stretch at 1 to 24 is a signal peptide; it reads MAVMPPRTLLLLLSGALALTQTWA. Positions 25-114 are alpha-1; sequence GSHSMRYFFT…LRGYYNQSED (90 aa). Residues 25–308 are Extracellular-facing; it reads GSHSMRYFFT…EPSSQPTIPI (284 aa). An N-linked (GlcNAc...) asparagine glycan is attached at asparagine 110. The interval 115-206 is alpha-2; sequence GSHTIQIMYG…ENGKETLQRT (92 aa). Intrachain disulfides connect cysteine 125-cysteine 188 and cysteine 227-cysteine 283. The tract at residues 207–298 is alpha-3; sequence DPPKTHMTHH…GLPKPLTLRW (92 aa). Positions 209 to 295 constitute an Ig-like C1-type domain; that stretch reads PKTHMTHHPI…QHEGLPKPLT (87 aa). The connecting peptide stretch occupies residues 299-308; the sequence is EPSSQPTIPI. Residues 309–332 traverse the membrane as a helical segment; it reads VGIIAGLVLLGAVITGAVVAAVMW. Residues 333–365 lie on the Cytoplasmic side of the membrane; that stretch reads RRKSSDRKGGSYTQAASSDSAQGSDVSLTACKV. The segment at 339–360 is disordered; it reads RKGGSYTQAASSDSAQGSDVSL. Serine 343 is modified (phosphoserine). Residue tyrosine 344 is modified to Phosphotyrosine. A compositionally biased stretch (low complexity) spans 346–359; the sequence is QAASSDSAQGSDVS. A phosphoserine mark is found at serine 349, serine 350, serine 352, serine 356, and serine 359.

It belongs to the MHC class I family. Heterodimer of an alpha chain and a beta chain (beta-2-microglobulin).

The protein resides in the membrane. In terms of biological role, involved in the presentation of foreign antigens to the immune system. This is Patr class I histocompatibility antigen, A-2 alpha chain from Pan troglodytes (Chimpanzee).